A 423-amino-acid polypeptide reads, in one-letter code: AP-1 complex subunit mu-1 (423 aa).

Serine 2 is subject to N-acetylserine. Phosphothreonine occurs at positions 152, 154, and 223. The 254-residue stretch at 168–421 (KNEVFLDVIE…ITQNGDYQLR (254 aa)) folds into the MHD domain.

This sequence belongs to the adaptor complexes medium subunit family. Adaptor protein complex 1 (AP-1) is a heterotetramer composed of two large adaptins (gamma-type subunit AP1G1 and beta-type subunit AP1B1), a medium adaptin (mu-type subunit AP1M1 or AP1M2) and a small adaptin (sigma-type subunit AP1S1 or AP1S2 or AP1S3). Interacts with MARCHF11. Post-translationally, phosphorylation of membrane-bound AP1M1/AP1M2 increases its affinity for sorting signals.

The protein localises to the cytoplasmic vesicle. It localises to the clathrin-coated vesicle membrane. It is found in the golgi apparatus. Its function is as follows. Subunit of clathrin-associated adaptor protein complex 1 that plays a role in protein sorting in the trans-Golgi network (TGN) and endosomes. The AP complexes mediate the recruitment of clathrin to membranes and the recognition of sorting signals within the cytosolic tails of transmembrane cargo molecules. The sequence is that of AP-1 complex subunit mu-1 from Bos taurus (Bovine).